The following is a 514-amino-acid chain: 3-octaprenyl-4-hydroxybenzoate carboxy-lyase (514 aa).

Position 177 (Asn-177) interacts with Mn(2+). Prenylated FMN-binding positions include 180–182 (IYR), 194–196 (RWL), and 199–200 (RG). Residue Glu-243 coordinates Mn(2+). Asp-314 functions as the Proton donor in the catalytic mechanism.

This sequence belongs to the UbiD family. Homohexamer. Requires prenylated FMN as cofactor. It depends on Mn(2+) as a cofactor.

The protein localises to the cell membrane. It catalyses the reaction a 4-hydroxy-3-(all-trans-polyprenyl)benzoate + H(+) = a 2-(all-trans-polyprenyl)phenol + CO2. It functions in the pathway cofactor biosynthesis; ubiquinone biosynthesis. Its function is as follows. Catalyzes the decarboxylation of 3-octaprenyl-4-hydroxy benzoate to 2-octaprenylphenol, an intermediate step in ubiquinone biosynthesis. The polypeptide is 3-octaprenyl-4-hydroxybenzoate carboxy-lyase (Bordetella petrii (strain ATCC BAA-461 / DSM 12804 / CCUG 43448)).